The primary structure comprises 417 residues: Phosphoglycerate kinase (417 aa).

Residues valine 23, aspartate 24, phenylalanine 25, asparagine 26, glutamine 38, arginine 39, serine 62, histidine 63, glycine 65, arginine 66, leucine 122, arginine 123, histidine 170, and arginine 171 each contribute to the (2R)-3-phosphoglycerate site. Glycine 214 is an ADP binding site. Glycine 214 is a binding site for CDP. 2 residues coordinate AMP: alanine 215 and lysine 216. Position 215 (alanine 215) interacts with ATP. Alanine 215 lines the Mg(2+) pocket. Aspartate 219 is a binding site for CDP. Residue aspartate 219 participates in Mg(2+) binding. Lysine 220 is a binding site for AMP. Lysine 220 is an ATP binding site. Position 238 (glycine 238) interacts with ADP. Glycine 238 is a binding site for CDP. Residues glycine 239 and glycine 313 each contribute to the AMP site. The ATP site is built by glycine 239 and glycine 313. CDP is bound by residues glycine 338, valine 340, and phenylalanine 343. Phenylalanine 343 serves as a coordination point for ADP. Glutamate 344 provides a ligand contact to AMP. Positions 344, 375, and 376 each coordinate ATP. Aspartate 375 serves as a coordination point for Mg(2+).

It belongs to the phosphoglycerate kinase family. As to quaternary structure, monomer. It depends on Mg(2+) as a cofactor.

Its subcellular location is the cytoplasm. It carries out the reaction (2R)-3-phosphoglycerate + ATP = (2R)-3-phospho-glyceroyl phosphate + ADP. It functions in the pathway carbohydrate degradation; glycolysis; pyruvate from D-glyceraldehyde 3-phosphate: step 2/5. Its function is as follows. Catalyzes one of the two ATP producing reactions in the glycolytic pathway via the reversible conversion of 1,3-diphosphoglycerate to 3-phosphoglycerate. In addition to its role as a glycolytic enzyme, it seems that PGK-1 acts as a polymerase alpha cofactor protein (primer recognition protein). May play a role in sperm motility. In Gallus gallus (Chicken), this protein is Phosphoglycerate kinase (PGK).